The sequence spans 129 residues: Probable protein cornichon homolog 2 (129 aa).

Helical transmembrane passes span 45–65 and 105–125; these read FIVQ…FMTL and LAYI…SALD.

This sequence belongs to the cornichon family.

Its subcellular location is the membrane. The chain is Probable protein cornichon homolog 2 from Arabidopsis thaliana (Mouse-ear cress).